We begin with the raw amino-acid sequence, 178 residues long: ATP synthase subunit delta (178 aa).

Belongs to the ATPase delta chain family. In terms of assembly, F-type ATPases have 2 components, F(1) - the catalytic core - and F(0) - the membrane proton channel. F(1) has five subunits: alpha(3), beta(3), gamma(1), delta(1), epsilon(1). F(0) has three main subunits: a(1), b(2) and c(10-14). The alpha and beta chains form an alternating ring which encloses part of the gamma chain. F(1) is attached to F(0) by a central stalk formed by the gamma and epsilon chains, while a peripheral stalk is formed by the delta and b chains.

The protein resides in the cell inner membrane. Its function is as follows. F(1)F(0) ATP synthase produces ATP from ADP in the presence of a proton or sodium gradient. F-type ATPases consist of two structural domains, F(1) containing the extramembraneous catalytic core and F(0) containing the membrane proton channel, linked together by a central stalk and a peripheral stalk. During catalysis, ATP synthesis in the catalytic domain of F(1) is coupled via a rotary mechanism of the central stalk subunits to proton translocation. Functionally, this protein is part of the stalk that links CF(0) to CF(1). It either transmits conformational changes from CF(0) to CF(1) or is implicated in proton conduction. This chain is ATP synthase subunit delta, found in Marinobacter nauticus (strain ATCC 700491 / DSM 11845 / VT8) (Marinobacter aquaeolei).